The chain runs to 639 residues: Chaperone protein HtpG (639 aa).

An a; substrate-binding region spans residues 1 to 347 (MSHQETHGFQ…SNDLPLNVSR (347 aa)). Positions 348-564 (EILQDNKITT…AGEMSSQMIK (217 aa)) are b. The segment at 565–639 (LMQAAGQAVT…MNKMLLASVK (75 aa)) is c.

It belongs to the heat shock protein 90 family. In terms of assembly, homodimer.

It localises to the cytoplasm. Its function is as follows. Molecular chaperone. Has ATPase activity. This is Chaperone protein HtpG from Shewanella loihica (strain ATCC BAA-1088 / PV-4).